The following is a 469-amino-acid chain: Cyclin-dependent kinase 14 (469 aa).

A phosphoserine mark is found at serine 24, serine 78, and serine 95. Positions 103–133 (FKSSSAGKESPKVRRHSSPSSPTSPKFGKAD) are disordered. Serine 134 is subject to Phosphoserine. Residues 135–419 (YEKLEKLGEG…AQAALSHEYF (285 aa)) enclose the Protein kinase domain. Residues 141–149 (LGEGSYATV) and lysine 164 contribute to the ATP site. Catalysis depends on aspartate 256, which acts as the Proton acceptor. A disordered region spans residues 449–469 (ESMRAFGKNNSYGKSLSNSKH). Residues 456–469 (KNNSYGKSLSNSKH) are compositionally biased toward polar residues.

Belongs to the protein kinase superfamily. CMGC Ser/Thr protein kinase family. CDC2/CDKX subfamily. In terms of assembly, found in a complex with LRP6, CCNY and CAPRIN2 during G2/M stage; CAPRIN2 functions as a scaffold for the complex by binding to CCNY via its N terminus and to CDK14 via its C terminus. Interacts with CCNY; CCNY mediates its recruitment to the plasma membrane and promotes phosphorylation of LRP6. Interacts with CCDN3 and CDKN1A. Interacts with SEPT8. Interacts with 14-3-3 proteina YWHAB, YWHAE, YWHAH and YWHAQ. In terms of tissue distribution, in the adult, widely expressed at low levels except in brain, kidney and testis where expression is high. In the brain, detected in cortex, hippocampus, dentate gyrus, amygdala cortex, parasubiculum and cerebellum. In the embryo, expressed predominantly in the nervous system.

The protein resides in the cell membrane. It localises to the cytoplasm. The protein localises to the nucleus. The enzyme catalyses L-seryl-[protein] + ATP = O-phospho-L-seryl-[protein] + ADP + H(+). It catalyses the reaction L-threonyl-[protein] + ATP = O-phospho-L-threonyl-[protein] + ADP + H(+). Its activity is regulated as follows. Serine/threonine-protein kinase activity is promoted by associated cyclins CCDN3 and CCNY and repressed by CDKN1A. In terms of biological role, serine/threonine-protein kinase involved in the control of the eukaryotic cell cycle, whose activity is controlled by an associated cyclin. Acts as a cell-cycle regulator of Wnt signaling pathway during G2/M phase by mediating the phosphorylation of LRP6 at 'Ser-1490', leading to the activation of the Wnt signaling pathway. Acts as a regulator of cell cycle progression and cell proliferation via its interaction with CCDN3. Phosphorylates RB1 in vitro, however the relevance of such result remains to be confirmed in vivo. May also play a role in meiosis, neuron differentiation and may indirectly act as a negative regulator of insulin-responsive glucose transport. The sequence is that of Cyclin-dependent kinase 14 (Cdk14) from Mus musculus (Mouse).